Here is a 299-residue protein sequence, read N- to C-terminus: Somaliensene A/B synthase (299 aa).

Transmembrane regions (helical) follow at residues 32-49, 56-72, 110-132, 153-171, 177-194, 222-241, and 247-269; these read WTTL…AVHT, TAVA…LFVY, IAVR…ALLW, LYAG…EIVA, AWRW…LMSV, VFLC…FLMA, and WWIV…RVVL.

It belongs to the UbiA prenyltransferase family. It depends on Mg(2+) as a cofactor.

It is found in the cell membrane. The catalysed reaction is (2E,6E,10E,14E)-geranylfarnesyl diphosphate = somaliensene A + diphosphate. It catalyses the reaction (2E,6E,10E,14E)-geranylfarnesyl diphosphate = (-)-somaliensene B + diphosphate. The protein operates within secondary metabolite biosynthesis; terpenoid biosynthesis. In terms of biological role, sesterterpene cyclase, which converts geranylfarnesyl diphosphate (GFPP) into the terpenes somaliensene A and somaliensene B. The protein is Somaliensene A/B synthase of Streptomyces somaliensis (strain ATCC 33201 / DSM 40738 / JCM 12659 / KCTC 9044 / NCTC 11332 / NRRL B-12077 / IP 733).